We begin with the raw amino-acid sequence, 242 residues long: Universal stress protein PHOS32 (242 aa).

Residues 1–43 constitute a chloroplast transit peptide; the sequence is MNPADSDHPQLPNIKIHHPPSPRHSHHHHSSSTPSSAATPTPT. The tract at residues 1–45 is disordered; it reads MNPADSDHPQLPNIKIHHPPSPRHSHHHHSSSTPSSAATPTPTAG. Residues 15–30 are compositionally biased toward basic residues; the sequence is KIHHPPSPRHSHHHHS. Proline 19 contacts ATP. Residue serine 21 is modified to Phosphoserine; by MAPK3 and MAPK6. Residues 31-44 show a composition bias toward low complexity; sequence SSTPSSAATPTPTA. ATP is bound by residues valine 83, 168 to 178, and 186 to 188; these read GSRGFGAEKKR and SVS. At serine 219 the chain carries Phosphoserine.

It belongs to the universal stress protein A family. Phosphorylated by MAPK3 and MAPK6 after pathogenic elicitation (e.g. bacterial flg22, Phytophthora infestans zoospores and xylanase).

Its subcellular location is the plastid. The protein resides in the chloroplast. This chain is Universal stress protein PHOS32, found in Arabidopsis thaliana (Mouse-ear cress).